We begin with the raw amino-acid sequence, 966 residues long: MATANGAHLFNHYSSNSRFIHFTSRNTSSKLFLTKTSHFRRPKRCFHVNNTLSEKIHHPITEQGGESDLSSFAPDAASITSSIKYHAEFTPVFSPERFELPKAFFATAQSVRDSLLINWNATYDIYEKLNMKQAYYLSMEFLQGRALLNAIGNLELTGAFAEALKNLGHNLENVASQEPDAALGNGGLGRLASCFLDSLATLNYPAWGYGLRYKYGLFKQRITKDGQEEVAEDWLEIGSPWEVVRNDVSYPIKFYGKVSTGSDGKRYWIGGEDIKAVAYDVPIPGYKTRTTISLRLWSTQVPSADFDLSAFNAGEHTKACEAQANAEKICYILYPGDESEEGKILRLKQQYTLCSASLQDIISRFERRSGDRIKWEEFPEKVAVQMNDTHPTLCIPELMRILIDLKGLNWNEAWNITQRTVAYTNHTVLPEALEKWSYELMQKLLPRHVEIIEAIDEELVHEIVLKYGSMDLNKLEEKLTTMRILENFDLPSSVAELFIKPEISVDDDTETVEVHDKVEASDKVVTNDEDDTGKKTSVKIEAAAEKDIDKKTPVSPEPAVIPPKKVRMANLCVVGGHAVNGVAEIHSEIVKEEVFNDFYELWPEKFQNKTNGVTPRRWIRFCNPPLSAIITKWTGTEDWVLKTEKLAELQKFADNEDLQNEWREAKRSNKIKVVSFLKEKTGYSVVPDAMFDIQVKRIHEYKRQLLNIFGIVYRYKKMKEMTAAERKTNFVPRVCIFGGKAFATYVQAKRIVKFITDVGATINHDPEIGDLLKVVFVPDYNVSVAELLIPASDLSEHISTAGMEASGTSNMKFAMNGCIQIGTLDGANVEIREEVGEENFFLFGAQAHEIAGLRKERADGKFVPDERFEEVKEFVRSGAFGSYNYDDLIGSLEGNEGFGRADYFLVGKDFPSYIECQEKVDEAYRDQKRWTTMSILNTAGSYKFSSDRTIHEYAKDIWNIEAVEIA.

Residues 1–50 (MATANGAHLFNHYSSNSRFIHFTSRNTSSKLFLTKTSHFRRPKRCFHVNN) constitute a chloroplast transit peptide. Lys812 is subject to N6-(pyridoxal phosphate)lysine.

This sequence belongs to the glycogen phosphorylase family. It depends on pyridoxal 5'-phosphate as a cofactor. Tuber.

Its subcellular location is the plastid. It localises to the chloroplast. It is found in the amyloplast. It carries out the reaction [(1-&gt;4)-alpha-D-glucosyl](n) + phosphate = [(1-&gt;4)-alpha-D-glucosyl](n-1) + alpha-D-glucose 1-phosphate. In terms of biological role, phosphorylase is an important allosteric enzyme in carbohydrate metabolism. Enzymes from different sources differ in their regulatory mechanisms and in their natural substrates. However, all known phosphorylases share catalytic and structural properties. The protein is Alpha-1,4 glucan phosphorylase L-1 isozyme, chloroplastic/amyloplastic of Solanum tuberosum (Potato).